The sequence spans 382 residues: Beta-1,4-galactosyltransferase 6 (382 aa).

The Cytoplasmic portion of the chain corresponds to 1 to 14 (MSVLRRMMRVSNRS). A helical; Signal-anchor for type II membrane protein transmembrane segment spans residues 15–35 (LLAFIFFFSLSSSCLYFIYVA). The Lumenal portion of the chain corresponds to 36–382 (PGIANTYLFM…MPELAPIEDY (347 aa)). N-linked (GlcNAc...) asparagine glycosylation is found at Asn-71, Asn-75, Asn-83, Asn-84, Asn-99, and Asn-122. Cys-108 and Cys-152 are disulfide-bonded. UDP-alpha-D-galactose-binding positions include 163–167 (PFRNR), 202–204 (FNR), 229–230 (VD), Tyr-258, and Trp-290. A disulfide bridge links Cys-223 with Cys-242. Asp-230 is a binding site for Mn(2+). 292–295 (GEDD) serves as a coordination point for N-acetyl-D-glucosamine. An N-linked (GlcNAc...) asparagine glycan is attached at Asn-307. Position 323 (His-323) interacts with Mn(2+). Position 323–324 (323–324 (HH)) interacts with UDP-alpha-D-galactose. Residue Arg-334 coordinates N-acetyl-D-glucosamine. Residue Asn-367 is glycosylated (N-linked (GlcNAc...) asparagine).

This sequence belongs to the glycosyltransferase 7 family. Mn(2+) serves as cofactor. It depends on Mg(2+) as a cofactor. As to expression, high expression in brain and adrenal gland, lower in liver, lung, colon and peripheral white blood cells.

Its subcellular location is the golgi apparatus. The protein resides in the golgi stack membrane. It carries out the reaction a beta-D-glucosyl-(1&lt;-&gt;1')-N-acylsphing-4-enine + UDP-alpha-D-galactose = a beta-D-Gal-(1-&gt;4)-beta-D-Glc-(1&lt;-&gt;1)-Cer(d18:1(4E)) + UDP + H(+). It functions in the pathway protein modification; protein glycosylation. The protein operates within sphingolipid metabolism. Its activity is regulated as follows. Inhibited by EDTA. In terms of biological role, catalyzes the synthesis of lactosylceramide (LacCer) via the transfer of galactose from UDP-galactose to glucosylceramide (GlcCer). LacCer is the starting point in the biosynthesis of all gangliosides (membrane-bound glycosphingolipids) which play pivotal roles in the CNS including neuronal maturation and axonal and myelin formation. The chain is Beta-1,4-galactosyltransferase 6 from Homo sapiens (Human).